Here is a 279-residue protein sequence, read N- to C-terminus: Phosphonates import ATP-binding protein PhnC 2 (279 aa).

The ABC transporter domain occupies 10–253; that stretch reads LSLKGVSVRY…VARNLYAKQS (244 aa). 43-50 serves as a coordination point for ATP; the sequence is GASGAGKS. A compositionally biased stretch (low complexity) spans 253 to 262; sequence SNASNTSAST. The disordered stretch occupies residues 253-279; it reads SNASNTSASTDSPRTLQSSQTKELLPC. Residues 263–279 show a composition bias toward polar residues; that stretch reads DSPRTLQSSQTKELLPC.

It belongs to the ABC transporter superfamily. Phosphonates importer (TC 3.A.1.9.1) family. In terms of assembly, the complex is composed of two ATP-binding proteins (PhnC), two transmembrane proteins (PhnE) and a solute-binding protein (PhnD).

It localises to the cell inner membrane. It carries out the reaction phosphonate(out) + ATP + H2O = phosphonate(in) + ADP + phosphate + H(+). In terms of biological role, part of the ABC transporter complex PhnCDE involved in phosphonates import. Responsible for energy coupling to the transport system. This is Phosphonates import ATP-binding protein PhnC 2 from Cupriavidus metallidurans (strain ATCC 43123 / DSM 2839 / NBRC 102507 / CH34) (Ralstonia metallidurans).